We begin with the raw amino-acid sequence, 560 residues long: Bifunctional NAD(P)H-hydrate repair enzyme (560 aa).

Positions Met-1–Val-241 are NAD(P)H-hydrate epimerase. The region spanning Leu-29–Ala-235 is the YjeF N-terminal domain. An NADPHX 1; for epimerase activity region spans residues Asn-77–Asp-81. K(+) contacts are provided by Asn-78 and Asp-145. The segment at Gly-149 to Pro-155 is NADPHX 1; for epimerase activity. Residues Tyr-160 and Asp-178 each coordinate (6S)-NADPHX. Residue Ser-181 participates in K(+) binding. The YjeF C-terminal domain occupies Leu-249–Ser-547. An ADP-dependent (S)-NAD(P)H-hydrate dehydratase region spans residues Leu-249–Gln-560. Gly-351 lines the (6S)-NADPHX pocket. The interval His-417–Arg-423 is NADPHX 2; for dehydratase activity. ADP contacts are provided by residues Lys-454–Thr-458 and Asn-475–Gly-484. Asp-485 provides a ligand contact to (6S)-NADPHX.

The protein in the N-terminal section; belongs to the NnrE/AIBP family. In the C-terminal section; belongs to the NnrD/CARKD family. K(+) serves as cofactor.

It catalyses the reaction (6S)-NADHX + ADP = AMP + phosphate + NADH + H(+). The catalysed reaction is (6S)-NADPHX + ADP = AMP + phosphate + NADPH + H(+). The enzyme catalyses (6R)-NADHX = (6S)-NADHX. It carries out the reaction (6R)-NADPHX = (6S)-NADPHX. In terms of biological role, bifunctional enzyme that catalyzes the epimerization of the S- and R-forms of NAD(P)HX and the dehydration of the S-form of NAD(P)HX at the expense of ADP, which is converted to AMP. This allows the repair of both epimers of NAD(P)HX, a damaged form of NAD(P)H that is a result of enzymatic or heat-dependent hydration. The chain is Bifunctional NAD(P)H-hydrate repair enzyme from Leishmania major.